The primary structure comprises 262 residues: Octopine permease ATP-binding protein P (262 aa).

Residues 9-254 (VQLKDIRKNF…PRTDRFRQFL (246 aa)) form the ABC transporter domain. 41 to 48 (GSSGSGKS) provides a ligand contact to ATP.

This sequence belongs to the ABC transporter superfamily.

Its subcellular location is the cell inner membrane. Component of the octopine active transport system probably consisting of four subunits: Q, M, P and T. The chain is Octopine permease ATP-binding protein P (occP) from Rhizobium radiobacter (Agrobacterium tumefaciens).